The primary structure comprises 238 residues: Ribonuclease 3 (238 aa).

Positions 17-140 (YATLEKALGY…LMAGVYLEAG (124 aa)) constitute an RNase III domain. Position 53 (glutamate 53) interacts with Mg(2+). Aspartate 57 is a catalytic residue. Positions 126 and 129 each coordinate Mg(2+). The active site involves glutamate 129. The DRBM domain occupies 167-236 (DYKTALQELT…AYQALQKLKE (70 aa)).

It belongs to the ribonuclease III family. Homodimer. Mg(2+) serves as cofactor.

It is found in the cytoplasm. The catalysed reaction is Endonucleolytic cleavage to 5'-phosphomonoester.. Its function is as follows. Digests double-stranded RNA. Involved in the processing of primary rRNA transcript to yield the immediate precursors to the large and small rRNAs (23S and 16S). Processes some mRNAs, and tRNAs when they are encoded in the rRNA operon. Processes pre-crRNA and tracrRNA of type II CRISPR loci if present in the organism. The sequence is that of Ribonuclease 3 from Helicobacter pylori (strain Shi470).